Reading from the N-terminus, the 365-residue chain is Histidinol-phosphate aminotransferase (365 aa).

The segment at 1-22 is disordered; that stretch reads MSRPVPNPGILDIAPYTPGKSP. Lysine 221 bears the N6-(pyridoxal phosphate)lysine mark.

This sequence belongs to the class-II pyridoxal-phosphate-dependent aminotransferase family. Histidinol-phosphate aminotransferase subfamily. Homodimer. It depends on pyridoxal 5'-phosphate as a cofactor.

The enzyme catalyses L-histidinol phosphate + 2-oxoglutarate = 3-(imidazol-4-yl)-2-oxopropyl phosphate + L-glutamate. Its pathway is amino-acid biosynthesis; L-histidine biosynthesis; L-histidine from 5-phospho-alpha-D-ribose 1-diphosphate: step 7/9. The polypeptide is Histidinol-phosphate aminotransferase (Rhodopseudomonas palustris (strain BisA53)).